Reading from the N-terminus, the 240-residue chain is Small ribosomal subunit protein uS3 (240 aa).

Residues 39–109 (IRQYVEKNLS…QIRINVVEVA (71 aa)) form the KH type-2 domain. The tract at residues 214–240 (EEQAPAQPATTPKRQRRRQQFEDRSNE) is disordered.

It belongs to the universal ribosomal protein uS3 family. In terms of assembly, part of the 30S ribosomal subunit. Forms a tight complex with proteins S10 and S14.

Binds the lower part of the 30S subunit head. Binds mRNA in the 70S ribosome, positioning it for translation. The chain is Small ribosomal subunit protein uS3 from Gloeothece citriformis (strain PCC 7424) (Cyanothece sp. (strain PCC 7424)).